A 348-amino-acid polypeptide reads, in one-letter code: Dihydroorotase (348 aa).

2 residues coordinate Zn(2+): histidine 17 and histidine 19. Substrate is bound by residues 19–21 (HLR) and asparagine 45. 3 residues coordinate Zn(2+): lysine 103, histidine 140, and histidine 178. Position 103 is an N6-carboxylysine (lysine 103). Residue histidine 140 coordinates substrate. Leucine 223 serves as a coordination point for substrate. Residue aspartate 251 coordinates Zn(2+). Aspartate 251 is a catalytic residue. Residues histidine 255 and alanine 267 each contribute to the substrate site.

This sequence belongs to the metallo-dependent hydrolases superfamily. DHOase family. Class II DHOase subfamily. As to quaternary structure, homodimer. Requires Zn(2+) as cofactor.

It carries out the reaction (S)-dihydroorotate + H2O = N-carbamoyl-L-aspartate + H(+). Its pathway is pyrimidine metabolism; UMP biosynthesis via de novo pathway; (S)-dihydroorotate from bicarbonate: step 3/3. Functionally, catalyzes the reversible cyclization of carbamoyl aspartate to dihydroorotate. The polypeptide is Dihydroorotase (Escherichia coli O157:H7).